The following is a 120-amino-acid chain: Large ribosomal subunit protein uL18 (120 aa).

The segment at 1-22 is disordered; the sequence is MKVDRKTATHRRHQRIRRKIAG. Positions 8–20 are enriched in basic residues; sequence ATHRRHQRIRRKI.

The protein belongs to the universal ribosomal protein uL18 family. In terms of assembly, part of the 50S ribosomal subunit; part of the 5S rRNA/L5/L18/L25 subcomplex. Contacts the 5S and 23S rRNAs.

Its function is as follows. This is one of the proteins that bind and probably mediate the attachment of the 5S RNA into the large ribosomal subunit, where it forms part of the central protuberance. This chain is Large ribosomal subunit protein uL18, found in Gloeobacter violaceus (strain ATCC 29082 / PCC 7421).